We begin with the raw amino-acid sequence, 103 residues long: Large ribosomal subunit protein bL21 (103 aa).

It belongs to the bacterial ribosomal protein bL21 family. In terms of assembly, part of the 50S ribosomal subunit. Contacts protein L20.

Its function is as follows. This protein binds to 23S rRNA in the presence of protein L20. This is Large ribosomal subunit protein bL21 from Sodalis glossinidius (strain morsitans).